The chain runs to 295 residues: Protein transport protein SSO2 (295 aa).

Positions 1 to 18 (MSNPYQNSQNGYQQNNSY) are enriched in low complexity. The disordered stretch occupies residues 1-31 (MSNPYQNSQNGYQQNNSYELNNYPNKQYSSS). Over 1-270 (MSNPYQNSQN…SAKSARKKKL (270 aa)) the chain is Cytoplasmic. Residues 19–31 (ELNNYPNKQYSSS) show a composition bias toward polar residues. A coiled-coil region spans residues 33–110 (EDDFVQFMNE…NRIKNVQTQA (78 aa)). Residues 196-258 (LNEVQVRHRE…EQGVGHTNKA (63 aa)) form the t-SNARE coiled-coil homology domain. A helical; Anchor for type IV membrane protein transmembrane segment spans residues 271–291 (WCFFICLLIVIILAVILGAYF). Residues 292–295 (GTRK) lie on the Extracellular side of the membrane.

This sequence belongs to the syntaxin family.

It is found in the membrane. Its function is as follows. Late secretory t-SNARE protein required for secretion and proper cytokinesis. Plays an important role in the secretion of virulence-associated extracellular enzymes and vesicle-mediated polarized hyphal growth. The sequence is that of Protein transport protein SSO2 (SSO2) from Candida albicans (strain SC5314 / ATCC MYA-2876) (Yeast).